We begin with the raw amino-acid sequence, 2098 residues long: 1-phosphatidylinositol 3-phosphate 5-kinase (2098 aa).

The tract at residues 1–45 is disordered; sequence MATDDKTSPTLDSANDLPRSPTSPSHLTHFKPLTPDQDEPPFKSA. Residue Ala2 is modified to N-acetylalanine. Phosphoserine; by autocatalysis is present on residues Ser23 and Ser48. The disordered stretch occupies residues 57 to 123; that stretch reads KERAEGGQGE…EPTFGGHDPR (67 aa). A compositionally biased stretch (polar residues) spans 66–88; it reads EQQPLSGSWTSPQLPSRTQSVRS. Ser88 carries the phosphoserine modification. The FYVE-type zinc-finger motif lies at 158 to 218; the sequence is DSQCKECYDC…ACTYCRKIAL (61 aa). Residues Cys164, Cys167, Cys180, Cys183, Cys188, Cys191, Cys210, and Cys213 each coordinate Zn(2+). The interval 292-329 is disordered; sequence VQEDAGKSPARNRSASITNLSLDRSGSPMVPSYETSVS. Residues Ser299, Ser307, and Ser312 each carry the phosphoserine modification. A compositionally biased stretch (polar residues) spans 302–315; sequence RNRSASITNLSLDR. Ser318 is subject to Phosphoserine; by PKB/AKT1 or PKB/AKT2. A Phosphoserine modification is found at Ser329. In terms of domain architecture, DEP spans 365 to 440; it reads HSSGMEFQDH…DEYALYRPLQ (76 aa). The span at 442 to 459 shows a compositional bias: polar residues; that stretch reads TEFSETPSPDSDSVNSVE. The tract at residues 442-469 is disordered; it reads TEFSETPSPDSDSVNSVEGHSEPSWFKD. The span at 460–469 shows a compositional bias: basic and acidic residues; sequence GHSEPSWFKD. Ser475 carries the phosphoserine modification. The tract at residues 484 to 505 is disordered; sequence GDDNLANSASPSKRTSVSSFQS. The segment covering 488–505 has biased composition (polar residues); it reads LANSASPSKRTSVSSFQS. The segment at 616 to 868 is chaperonin-like domain; sequence MMALLQQLLH…MICVAYHSQL (253 aa). Disordered regions lie at residues 1161–1191 and 1512–1616; these read RIQP…NEGD and FQQE…STDS. The span at 1177–1186 shows a compositional bias: low complexity; the sequence is SSTSSGQSGS. Phosphoserine; by autocatalysis is present on Ser1522. A phosphoserine mark is found at Ser1544 and Ser1549. Low complexity predominate over residues 1562–1578; that stretch reads LTTLSSQSSTSSTHLQL. Ser1669 bears the Phosphoserine; by autocatalysis mark. The segment at 1692–1799 is disordered; it reads QWNSAEEGLP…PQDEVDGGDT (108 aa). Residues 1704–1714 show a composition bias toward low complexity; sequence STSDSRPKSSS. A compositionally biased stretch (polar residues) spans 1723 to 1735; the sequence is GGQTNRTTETEPQ. Ser1754 carries the phosphoserine modification. In terms of domain architecture, PIPK spans 1758 to 2084; it reads SSQKRETLRG…RFCEAMDKYF (327 aa). The interval 1842-2098 is catalytic; sequence EEDFIRSLSH…DHWTGLGLNC (257 aa). Phosphoserine; by autocatalysis occurs at positions 1969 and 2053.

In terms of assembly, component of the PI(3,5)P2 regulatory complex/PAS complex, at least composed of PIKFYVE, FIG4 and VAC14. VAC14 nucleates the assembly of the complex and serves as a scaffold by pentamerizing into a star-shaped structure, which can bind a single copy each of PIKFYVE and FIG4 and coordinates their activities. Interacts (via chaperonin-like domain) with RABEPK; the interaction recruits RABEPK to the endosomal membrane. Interacts with SPAG9. Interacts with EGFR. Post-translationally, autophosphorylates which inhibits its own phosphatidylinositol 3-phosphate 5-kinase activity, stimulates FIG4 lipid phosphatase activity and down-regulates lipid product formation. Dephosphorylated by FIG4 in the PI(3,5)P2 regulatory complex, at Ser-48, Ser-1669 and Ser-2053. Phosphorylated in response to insulin at Ser-318 in a protein kinase B (PKB)-dependent manner.

It localises to the endosome membrane. The protein resides in the early endosome membrane. Its subcellular location is the cytoplasmic vesicle. The protein localises to the phagosome membrane. It is found in the late endosome membrane. The catalysed reaction is a 1,2-diacyl-sn-glycero-3-phospho-(1D-myo-inositol-3-phosphate) + ATP = a 1,2-diacyl-sn-glycero-3-phospho-(1D-myo-inositol-3,5-bisphosphate) + ADP + H(+). It carries out the reaction a 1,2-diacyl-sn-glycero-3-phospho-(1D-myo-inositol) + ATP = a 1,2-diacyl-sn-glycero-3-phospho-(1D-myo-inositol-5-phosphate) + ADP + H(+). The enzyme catalyses L-seryl-[protein] + ATP = O-phospho-L-seryl-[protein] + ADP + H(+). With respect to regulation, inhibited by apilimod and YM201636. In terms of biological role, dual specificity kinase implicated in myriad essential cellular processes such as maintenance of endomembrane homeostasis, and endocytic-vacuolar pathway, lysosomal trafficking, nuclear transport, stress- or hormone-induced signaling and cell cycle progression. The PI(3,5)P2 regulatory complex regulates both the synthesis and turnover of phosphatidylinositol 3,5-bisphosphate (PtdIns(3,5)P2). Sole enzyme to catalyze the phosphorylation of phosphatidylinositol 3-phosphate on the fifth hydroxyl of the myo-inositol ring, to form (PtdIns(3,5)P2). Also catalyzes the phosphorylation of phosphatidylinositol on the fifth hydroxyl of the myo-inositol ring, to form phosphatidylinositol 5-phosphate (PtdIns(5)P). Has serine-protein kinase activity and is able to autophosphorylate and transphosphorylate. Autophosphorylation inhibits its own phosphatidylinositol 3-phosphate 5-kinase activity, stimulates FIG4 lipid phosphatase activity and down-regulates lipid product formation. Involved in key endosome operations such as fission and fusion in the course of endosomal cargo transport. Required for the maturation of early into late endosomes, phagosomes and lysosomes. Regulates vacuole maturation and nutrient recovery following engulfment of macromolecules, initiates the redistribution of accumulated lysosomal contents back into the endosome network. Critical regulator of the morphology, degradative activity, and protein turnover of the endolysosomal system in macrophages and platelets. In neutrophils, critical to perform chemotaxis, generate ROS, and undertake phagosome fusion with lysosomes. Plays a key role in the processing and presentation of antigens by major histocompatibility complex class II (MHC class II) mediated by CTSS. Regulates melanosome biogenesis by controlling the delivery of proteins from the endosomal compartment to the melanosome. Essential for systemic glucose homeostasis, mediates insulin-induced signals for endosome/actin remodeling in the course of GLUT4 translocation/glucose uptake activation. Supports microtubule-based endosome-to-trans-Golgi network cargo transport, through association with SPAG9 and RABEPK. Mediates EGFR trafficking to the nucleus. Its function is as follows. (Microbial infection) Required for cell entry of coronaviruses SARS-CoV and SARS-CoV-2, as well as human coronavirus EMC (HCoV-EMC) by endocytosis. The chain is 1-phosphatidylinositol 3-phosphate 5-kinase from Homo sapiens (Human).